We begin with the raw amino-acid sequence, 413 residues long: MGSIIDAAAAADPVVLMETAFRKAVKSRQIPGAVIMARDCSGNLNYTRCFGARTVRRDECNQLPPLQVDTPCRLASATKLLTTIMALQCMERGLVDLDETVDRLLPDLSAMPVLEGFDDAGNARLRERRGKITLRHLLTHTSGLSYVFLHPLLREYMAQGHLQSAEKFGIQSRLAPPAVNDPGAEWIYGANLDWAGKLVERATGLDLEQYLQENICAPLGITDMTFKLQQRPDMLARRADQTHRNSADGRLRYDDSVYFRADGEECFGGQGVFSGPGSYMKVLHSLLKRDGLLLQPQTVDMMFQPALEPRLEEQMNQHMDASPHINYGGPMPMVLRRSFGLGGIIALEDLDGEDWRRKGSLTFGGGPNIVWQIDPKAGLCTLAFFQLEPWNDPVCRDLTRTFEHAIYAQYQQG.

Arg73 contacts monacolin J. Ser76 (acyl-ester intermediate) is an active-site residue. Monacolin J is bound by residues Arg173, Tyr188, and Tyr258. Gly366 contacts 2-methylbutanoate. Monacolin J is bound by residues Glu388 and Trp390.

This sequence belongs to the class-A beta-lactamase family. As to quaternary structure, interacts with LovF.

The catalysed reaction is monacolin J carboxylate + (S)-2-methylbutanoyl-[2-methylbutanoate polyketide synthase] = lovastatin carboxylate + holo-[2-methylbutanoate polyketide synthase]. It participates in polyketide biosynthesis; lovastatin biosynthesis. Monacolin J acid methylbutanoyltransferase; part of the gene cluster that mediates the biosynthesis of lovastatin (also known as mevinolin, mevacor or monacolin K), a hypolipidemic inhibitor of (3S)-hydroxymethylglutaryl-coenzyme A (HMG-CoA) reductase (HMGR). The first step in the biosynthesis of lovastatin is the production of dihydromonacolin L acid by the lovastatin nonaketide synthase lovB and the trans-acting enoyl reductase lovC via condensation of one acetyl-CoA unit and 8 malonyl-CoA units. Dihydromonacolin L acid is released from lovB by the thioesterase lovG. Next, dihydromonacolin L acid is oxidized by the dihydromonacolin L monooxygenase lovA twice to form monacolin J acid. The 2-methylbutyrate moiety of lovastatin is synthesized by the lovastatin diketide synthase lovF via condensation of one acetyl-CoA unit and one malonyl-CoA unit. Finally, the covalent attachment of this moiety to monacolin J acid is catalyzed by the transesterase lovD to yield lovastatin. LovD has broad substrate specificity and can also convert monacolin J to simvastatin using alpha-dimethylbutanoyl-S-methyl-3-mercaptopropionate (DMB-S-MMP) as the thioester acyl donor, and can also catalyze the reverse reaction and function as hydrolase in vitro. LovD has much higher activity with LovF-bound 2-methylbutanoate than with free diketide substrates. In Aspergillus terreus (strain NIH 2624 / FGSC A1156), this protein is Monacolin J acid methylbutanoyltransferase.